Consider the following 296-residue polypeptide: Ribosomal RNA small subunit methyltransferase A (296 aa).

The S-adenosyl-L-methionine site is built by Asn-31, Leu-33, Gly-58, Glu-79, Asp-104, and Asn-129.

Belongs to the class I-like SAM-binding methyltransferase superfamily. rRNA adenine N(6)-methyltransferase family. RsmA subfamily.

Its subcellular location is the cytoplasm. It catalyses the reaction adenosine(1518)/adenosine(1519) in 16S rRNA + 4 S-adenosyl-L-methionine = N(6)-dimethyladenosine(1518)/N(6)-dimethyladenosine(1519) in 16S rRNA + 4 S-adenosyl-L-homocysteine + 4 H(+). Functionally, specifically dimethylates two adjacent adenosines (A1518 and A1519) in the loop of a conserved hairpin near the 3'-end of 16S rRNA in the 30S particle. May play a critical role in biogenesis of 30S subunits. The sequence is that of Ribosomal RNA small subunit methyltransferase A from Shouchella clausii (strain KSM-K16) (Alkalihalobacillus clausii).